The sequence spans 282 residues: Phosphatidylserine decarboxylase proenzyme (282 aa).

Residues D89, H145, and S249 each act as charge relay system; for autoendoproteolytic cleavage activity in the active site. The active-site Schiff-base intermediate with substrate; via pyruvic acid; for decarboxylase activity is S249. Position 249 is a pyruvic acid (Ser); by autocatalysis (S249).

Belongs to the phosphatidylserine decarboxylase family. PSD-B subfamily. Prokaryotic type I sub-subfamily. Heterodimer of a large membrane-associated beta subunit and a small pyruvoyl-containing alpha subunit. Pyruvate serves as cofactor. Post-translationally, is synthesized initially as an inactive proenzyme. Formation of the active enzyme involves a self-maturation process in which the active site pyruvoyl group is generated from an internal serine residue via an autocatalytic post-translational modification. Two non-identical subunits are generated from the proenzyme in this reaction, and the pyruvate is formed at the N-terminus of the alpha chain, which is derived from the carboxyl end of the proenzyme. The autoendoproteolytic cleavage occurs by a canonical serine protease mechanism, in which the side chain hydroxyl group of the serine supplies its oxygen atom to form the C-terminus of the beta chain, while the remainder of the serine residue undergoes an oxidative deamination to produce ammonia and the pyruvoyl prosthetic group on the alpha chain. During this reaction, the Ser that is part of the protease active site of the proenzyme becomes the pyruvoyl prosthetic group, which constitutes an essential element of the active site of the mature decarboxylase.

The protein localises to the cell membrane. It carries out the reaction a 1,2-diacyl-sn-glycero-3-phospho-L-serine + H(+) = a 1,2-diacyl-sn-glycero-3-phosphoethanolamine + CO2. It participates in phospholipid metabolism; phosphatidylethanolamine biosynthesis; phosphatidylethanolamine from CDP-diacylglycerol: step 2/2. Catalyzes the formation of phosphatidylethanolamine (PtdEtn) from phosphatidylserine (PtdSer). The polypeptide is Phosphatidylserine decarboxylase proenzyme (Anaeromyxobacter sp. (strain K)).